We begin with the raw amino-acid sequence, 213 residues long: Guanylate kinase (213 aa).

One can recognise a Guanylate kinase-like domain in the interval 10-189; the sequence is GLLLMVVAPS…AYADLAHIYH (180 aa). Residue 17-24 participates in ATP binding; the sequence is APSGVGKT.

Belongs to the guanylate kinase family.

The protein localises to the cytoplasm. It carries out the reaction GMP + ATP = GDP + ADP. Functionally, essential for recycling GMP and indirectly, cGMP. In Caulobacter vibrioides (strain ATCC 19089 / CIP 103742 / CB 15) (Caulobacter crescentus), this protein is Guanylate kinase (gmk).